The chain runs to 202 residues: Imidazole glycerol phosphate synthase subunit HisH 2 (202 aa).

The Glutamine amidotransferase type-1 domain maps to 1 to 202 (MIVVIDYGVG…QLFKNFVELV (202 aa)). The active-site Nucleophile is the Cys80. Residues His183 and Glu185 contribute to the active site.

As to quaternary structure, heterodimer of HisH and HisF.

It localises to the cytoplasm. The catalysed reaction is 5-[(5-phospho-1-deoxy-D-ribulos-1-ylimino)methylamino]-1-(5-phospho-beta-D-ribosyl)imidazole-4-carboxamide + L-glutamine = D-erythro-1-(imidazol-4-yl)glycerol 3-phosphate + 5-amino-1-(5-phospho-beta-D-ribosyl)imidazole-4-carboxamide + L-glutamate + H(+). The enzyme catalyses L-glutamine + H2O = L-glutamate + NH4(+). Its pathway is amino-acid biosynthesis; L-histidine biosynthesis; L-histidine from 5-phospho-alpha-D-ribose 1-diphosphate: step 5/9. In terms of biological role, IGPS catalyzes the conversion of PRFAR and glutamine to IGP, AICAR and glutamate. The HisH subunit catalyzes the hydrolysis of glutamine to glutamate and ammonia as part of the synthesis of IGP and AICAR. The resulting ammonia molecule is channeled to the active site of HisF. In Pseudomonas aeruginosa (strain ATCC 15692 / DSM 22644 / CIP 104116 / JCM 14847 / LMG 12228 / 1C / PRS 101 / PAO1), this protein is Imidazole glycerol phosphate synthase subunit HisH 2 (hisH2).